The sequence spans 429 residues: 3-isopropylmalate dehydratase large subunit (429 aa).

[4Fe-4S] cluster-binding residues include Cys303, Cys363, and Cys366.

It belongs to the aconitase/IPM isomerase family. LeuC type 2 subfamily. As to quaternary structure, heterodimer of LeuC and LeuD. It depends on [4Fe-4S] cluster as a cofactor.

It carries out the reaction (2R,3S)-3-isopropylmalate = (2S)-2-isopropylmalate. It functions in the pathway amino-acid biosynthesis; L-leucine biosynthesis; L-leucine from 3-methyl-2-oxobutanoate: step 2/4. Catalyzes the isomerization between 2-isopropylmalate and 3-isopropylmalate, via the formation of 2-isopropylmaleate. This Caldicellulosiruptor saccharolyticus (strain ATCC 43494 / DSM 8903 / Tp8T 6331) protein is 3-isopropylmalate dehydratase large subunit.